The following is a 500-amino-acid chain: L-arabinose isomerase (500 aa).

4 residues coordinate Mn(2+): Glu306, Glu333, His350, and His450.

The protein belongs to the arabinose isomerase family. Homohexamer. It depends on Mn(2+) as a cofactor.

It catalyses the reaction beta-L-arabinopyranose = L-ribulose. It participates in carbohydrate degradation; L-arabinose degradation via L-ribulose; D-xylulose 5-phosphate from L-arabinose (bacterial route): step 1/3. Catalyzes the conversion of L-arabinose to L-ribulose. The sequence is that of L-arabinose isomerase from Klebsiella pneumoniae (strain 342).